Here is a 636-residue protein sequence, read N- to C-terminus: Iron transport multicopper oxidase FET3 (636 aa).

A signal peptide spans Met-1 to Ala-21. Topologically, residues Glu-22–Lys-559 are extracellular. Asn-27, Asn-74, and Asn-77 each carry an N-linked (GlcNAc...) asparagine glycan. Plastocyanin-like domains are found at residues Trp-32–Asp-146 and Ser-157–Lys-301. Cu cation contacts are provided by His-81 and His-83. N-linked (GlcNAc...) asparagine glycans are attached at residues Asn-88 and Asn-113. Positions 126 and 128 each coordinate Cu cation. Residues Asn-194, Asn-198, Asn-244, Asn-265, Asn-292, Asn-300, Asn-359, and Asn-381 are each glycosylated (N-linked (GlcNAc...) asparagine). The Plastocyanin-like 3 domain occupies Tyr-362 to Pro-502. The Cu cation site is built by His-413, His-416, His-418, His-483, Cys-484, His-485, and His-489. The helical transmembrane segment at Gly-560–Met-584 threads the bilayer. Topologically, residues Asp-585 to Phe-636 are cytoplasmic.

Belongs to the multicopper oxidase family. Requires Cu cation as cofactor.

It is found in the cell membrane. The catalysed reaction is 4 Fe(2+) + O2 + 4 H(+) = 4 Fe(3+) + 2 H2O. It carries out the reaction 4 Cu(+) + O2 + 4 H(+) = 4 Cu(2+) + 2 H2O. In terms of biological role, iron transport multicopper ferroxidase required for Fe(2+) ion high affinity uptake. Required to oxidize Fe(2+) to Fe(3+), which is then transported into the cell via the ferric iron permease FTR1. Essential component of copper-dependent iron transport. Also has cuprous oxidase activity. The polypeptide is Iron transport multicopper oxidase FET3 (FET3) (Saccharomyces cerevisiae (strain ATCC 204508 / S288c) (Baker's yeast)).